Reading from the N-terminus, the 599-residue chain is Dachshund homolog 2 (599 aa).

The segment at 69-155 (RMVDMHGMKV…LITRKDFETL (87 aa)) is DACHbox-N. Disordered stretches follow at residues 166 to 186 (RQMT…PKRS), 237 to 280 (LQGN…GPQH), and 370 to 409 (RIPE…MDHH). Positions 237–262 (LQGNGSQNGTESEPDDLNSNTGGSES) are enriched in polar residues. Residues 389–405 (SQTSSHTSSSVSSSPSQ) are compositionally biased toward low complexity. The DACHbox-C stretch occupies residues 453–533 (SSVETLLTNI…KTKRKLQEAL (81 aa)). Residues 459-554 (LTNIQGLLKV…QALKQATTSD (96 aa)) adopt a coiled-coil conformation.

Belongs to the DACH/dachshund family. Interacts with SIX6 and EYA2.

The protein localises to the nucleus. Its function is as follows. Transcription factor that is involved in regulation of organogenesis. Seems to be a regulator for SIX1 and SIX6. Seems to act as a corepressor of SIX6 in regulating proliferation by directly repressing cyclin-dependent kinase inhibitors, including the p27Kip1 promoter. Is recruited with SIX6 to the p27Kip1 promoter in embryonal retina. SIX6 corepression also seems to involve NCOR1, TBL1, HDAC1 and HDAC3. May be involved together with PAX3, SIX1, and EYA2 in regulation of myogenesis. In the developing somite, expression of DACH2 and PAX3 is regulated by the overlying ectoderm, and DACH2 and PAX3 positively regulate each other's expression. Probably binds to DNA via its DACHbox-N domain. The chain is Dachshund homolog 2 (DACH2) from Homo sapiens (Human).